Here is a 295-residue protein sequence, read N- to C-terminus: Tyrosine recombinase XerC (295 aa).

Positions 1-84 constitute a Core-binding (CB) domain; the sequence is MTLEEQFLSY…SLKSFYRFLT (84 aa). In terms of domain architecture, Tyr recombinase spans 105-289; that stretch reads KLPEFFYQDE…SMQHLTVEYR (185 aa). Active-site residues include Arg-145, Lys-169, His-241, Arg-244, and His-267. The O-(3'-phospho-DNA)-tyrosine intermediate role is filled by Tyr-276.

It belongs to the 'phage' integrase family. XerC subfamily. As to quaternary structure, forms a cyclic heterotetrameric complex composed of two molecules of XerC and two molecules of XerD.

The protein resides in the cytoplasm. Its function is as follows. Site-specific tyrosine recombinase, which acts by catalyzing the cutting and rejoining of the recombining DNA molecules. The XerC-XerD complex is essential to convert dimers of the bacterial chromosome into monomers to permit their segregation at cell division. It also contributes to the segregational stability of plasmids. This is Tyrosine recombinase XerC from Lactobacillus delbrueckii subsp. bulgaricus (strain ATCC 11842 / DSM 20081 / BCRC 10696 / JCM 1002 / NBRC 13953 / NCIMB 11778 / NCTC 12712 / WDCM 00102 / Lb 14).